We begin with the raw amino-acid sequence, 301 residues long: NADH-cytochrome b5 reductase 3 (301 aa).

The N-myristoyl glycine moiety is linked to residue glycine 2. In terms of domain architecture, FAD-binding FR-type spans 40–152; the sequence is DIKYSLRLID…RGPNGLLVYQ (113 aa). An N6-acetyllysine modification is found at lysine 42. Position 43 is a phosphotyrosine (tyrosine 43). Arginine 92, proline 93, tyrosine 94, valine 109, lysine 111, and phenylalanine 114 together coordinate FAD. At lysine 120 the chain carries N6-acetyllysine. The FAD site is built by lysine 126, methionine 127, serine 128, and threonine 185.

The protein belongs to the flavoprotein pyridine nucleotide cytochrome reductase family. In terms of assembly, component of a complex composed of cytochrome b5, NADH-cytochrome b5 reductase (CYB5R3) and MTARC2. Interacts with MTLN; the interaction is required to maintain cellular lipid composition and leads to stimulation of mitochondrial respiratory complex I activity. Requires FAD as cofactor.

Its subcellular location is the endoplasmic reticulum membrane. The protein resides in the mitochondrion outer membrane. It carries out the reaction 2 Fe(III)-[cytochrome b5] + NADH = 2 Fe(II)-[cytochrome b5] + NAD(+) + H(+). Functionally, catalyzes the reduction of two molecules of cytochrome b5 using NADH as the electron donor. This is NADH-cytochrome b5 reductase 3 (CYB5R3) from Macaca fascicularis (Crab-eating macaque).